The sequence spans 485 residues: uncharacterized protein (485 aa).

Its subcellular location is the virion. This is an uncharacterized protein from Acanthamoeba polyphaga mimivirus (APMV).